The primary structure comprises 738 residues: Putative RNA-binding protein EEED8.10 (738 aa).

One can recognise an RRM domain in the interval 112–201 (RKIVVSNISA…QVMVVSAYVS (90 aa)). Residues 211–237 (LSDDVGSREDTPLSRASSTQSLASGSE) form a disordered region. A compositionally biased stretch (polar residues) spans 224-237 (SRASSTQSLASGSE). The 59-residue stretch at 239–297 (SFNLGNVPDKILRRVISFLPIHETIRLERVNKKFMEESIKSWELVNKIALARETVFNKQ) folds into the F-box domain.

This chain is Putative RNA-binding protein EEED8.10, found in Caenorhabditis elegans.